The sequence spans 1387 residues: DNA-directed RNA polymerase subunit beta'' (1387 aa).

Zn(2+) contacts are provided by C224, C295, C302, and C305. The interval 883–903 (SHTGKRNDPAGSGLIPDNGSD) is disordered.

Belongs to the RNA polymerase beta' chain family. RpoC2 subfamily. In terms of assembly, in plastids the minimal PEP RNA polymerase catalytic core is composed of four subunits: alpha, beta, beta', and beta''. When a (nuclear-encoded) sigma factor is associated with the core the holoenzyme is formed, which can initiate transcription. It depends on Zn(2+) as a cofactor.

Its subcellular location is the plastid. The protein resides in the chloroplast. It catalyses the reaction RNA(n) + a ribonucleoside 5'-triphosphate = RNA(n+1) + diphosphate. Its function is as follows. DNA-dependent RNA polymerase catalyzes the transcription of DNA into RNA using the four ribonucleoside triphosphates as substrates. This is DNA-directed RNA polymerase subunit beta'' from Platanus occidentalis (Sycamore).